A 376-amino-acid chain; its full sequence is Erythronate-4-phosphate dehydrogenase (376 aa).

Substrate is bound by residues S45 and T67. D147 contacts NAD(+). R209 is a catalytic residue. NAD(+) is bound at residue D233. Residue E238 is part of the active site. H255 functions as the Proton donor in the catalytic mechanism. Residue G258 coordinates NAD(+). Y259 is a binding site for substrate.

Belongs to the D-isomer specific 2-hydroxyacid dehydrogenase family. PdxB subfamily. In terms of assembly, homodimer.

The protein resides in the cytoplasm. The catalysed reaction is 4-phospho-D-erythronate + NAD(+) = (R)-3-hydroxy-2-oxo-4-phosphooxybutanoate + NADH + H(+). It functions in the pathway cofactor biosynthesis; pyridoxine 5'-phosphate biosynthesis; pyridoxine 5'-phosphate from D-erythrose 4-phosphate: step 2/5. Functionally, catalyzes the oxidation of erythronate-4-phosphate to 3-hydroxy-2-oxo-4-phosphonooxybutanoate. This Shewanella loihica (strain ATCC BAA-1088 / PV-4) protein is Erythronate-4-phosphate dehydrogenase.